Here is a 938-residue protein sequence, read N- to C-terminus: Isoleucine--tRNA ligase (938 aa).

A 'HIGH' region motif is present at residues 58-68 (PYANGHIHLGT). E565 is a binding site for L-isoleucyl-5'-AMP. The short motif at 606-610 (KMSKS) is the 'KMSKS' region element. K609 contacts ATP. Zn(2+) contacts are provided by C905, C908, C925, and C928.

This sequence belongs to the class-I aminoacyl-tRNA synthetase family. IleS type 1 subfamily. In terms of assembly, monomer. Zn(2+) serves as cofactor.

The protein resides in the cytoplasm. It carries out the reaction tRNA(Ile) + L-isoleucine + ATP = L-isoleucyl-tRNA(Ile) + AMP + diphosphate. Catalyzes the attachment of isoleucine to tRNA(Ile). As IleRS can inadvertently accommodate and process structurally similar amino acids such as valine, to avoid such errors it has two additional distinct tRNA(Ile)-dependent editing activities. One activity is designated as 'pretransfer' editing and involves the hydrolysis of activated Val-AMP. The other activity is designated 'posttransfer' editing and involves deacylation of mischarged Val-tRNA(Ile). The protein is Isoleucine--tRNA ligase of Nitratidesulfovibrio vulgaris (strain DSM 19637 / Miyazaki F) (Desulfovibrio vulgaris).